The following is a 199-amino-acid chain: Superoxide dismutase [Mn/Fe] 1 (199 aa).

Fe(3+) contacts are provided by histidine 27, histidine 81, aspartate 161, and histidine 165. Mn(2+) is bound by residues histidine 27, histidine 81, aspartate 161, and histidine 165.

The protein belongs to the iron/manganese superoxide dismutase family. In terms of assembly, homodimer. Can also form a heterodimer with SodM. The cofactor is Mn(2+). Fe(3+) serves as cofactor.

It catalyses the reaction 2 superoxide + 2 H(+) = H2O2 + O2. Destroys superoxide anion radicals which are normally produced within the cells and which are toxic to biological systems. Catalyzes the dismutation of superoxide anion radicals into O2 and H2O2 by successive reduction and oxidation of the transition metal ion at the active site. This Staphylococcus aureus (strain USA300) protein is Superoxide dismutase [Mn/Fe] 1 (sodA).